A 740-amino-acid polypeptide reads, in one-letter code: MAAFSEMGVMPEIAQAVEEMDWLLPTDIQAESIPLILGGGDVLMAAETGSGKTGAFSIPVIQIVYETLKDQQEGKKGKATIKTGASVLNKWQMNPYDRGSAFAIGSDGLCCQSREVKEWHGCRATKGLTKGKHYYEVSCHDQGLCRVGWSSMQASLDLGTDKFGFGFGGTGKKSHNKQFDNYGEEFTMHDTIGCYLDIDKGHVKFSKNGKDLGLAFEIPPHMKNQALFPACVLKNAELKFNFGEEEFKFPPKDGFVALSKAPESFVVKSQHTGSAQVAQTKFLPNAPKALIVEPSRELAEQTLNNVKQFKKYIDNPKLRELLIIGGVAARDQLSVLDNGVDIVVGTPGRLDDLVSTGKLNLSQVRFLVLDEADGLLSQGYSDFINRIHNQIPQITSDGKRLQVIVCSATLHSFDVKKLSEKIMHFPTWVDLKGEDSVPDTVHHVVVPVNPKTDRLWERLGKSHIRTDEVHAKDNTRPGANSPEMWSEAIKILKGEYAVRAIKEHKMDQAIIFCRTKIDCDNLEQYFMQQGGGPDKKGHQFSCVCLHGDRKPHERKQNLERFKKGDVRFLICTDVAARGIDIHGVPYVINVTLPDEKQNYVHRIGRVGRAERMGLAISLVATEKEKVWYHVCSSRGKGCYNTRLKEDGGCTIWYNEMQLLSEIEEHLNCTISQVEPDIKVPVDEFDGKVTYGQKRTLGGGNYKGHVDVLAPTVQELAALEKEAQTSFLHLGYLPNQLFRTF.

The segment at 1-295 is necessary for interaction with HNRNPK; that stretch reads MAAFSEMGVM…APKALIVEPS (295 aa). An interaction with dsRNA region spans residues 1 to 448; it reads MAAFSEMGVM…DTVHHVVVPV (448 aa). A necessary for interaction with RELA region spans residues 1 to 525; sequence MAAFSEMGVM…KIDCDNLEQY (525 aa). In terms of domain architecture, Helicase ATP-binding spans 2–428; it reads AAFSEMGVMP…SEKIMHFPTW (427 aa). ATP is bound at residue 46-53; the sequence is AETGSGKT. The 178-residue stretch at 70–247 folds into the B30.2/SPRY domain; sequence DQQEGKKGKA…LKFNFGEEEF (178 aa). N6-acetyllysine is present on residues lysine 239 and lysine 268. N6-acetyllysine; alternate is present on lysine 281. Lysine 281 is covalently cross-linked (Glycyl lysine isopeptide (Lys-Gly) (interchain with G-Cter in SUMO2); alternate). The short motif at 370 to 373 is the DEAD box element; that stretch reads DEAD. Serine 481 carries the phosphoserine modification. The Helicase C-terminal domain maps to 493–681; the sequence is KGEYAVRAIK…QVEPDIKVPV (189 aa). The tract at residues 525–740 is necessary for interaction with HNRNPK; that stretch reads YFMQQGGGPD…YLPNQLFRTF (216 aa).

The protein belongs to the DEAD box helicase family. DDX1 subfamily. In terms of assembly, found in a multi-helicase-TICAM1 complex at least composed of DHX36, DDX1, DDX21 and TICAM1; this complex exists in resting cells with or without poly(I:C) RNA ligand stimulation. Interacts with DHX36. Interacts (via B30.2/SPRY domain) with DDX21 (via N-terminus); this interaction serves as bridges to TICAM1. Interacts with FAM98A (via N- and C-terminus). Interacts with PHF5A (via C-terminus). Interacts with MBNL1. Interacts with CSTF2. Interacts with HNRNPK. Interacts with ATM. Interacts with RELA (via C-terminus). Component of the tRNA-splicing ligase complex. Interacts with PQBP1. Interacts with ERCC6. Phosphorylated by ATM kinase; phosphorylation is increased in response to ionizing radiation (IR).

It localises to the nucleus. It is found in the cytoplasm. Its subcellular location is the cytoplasmic granule. The protein resides in the cytosol. The protein localises to the mitochondrion. The enzyme catalyses ATP + H2O = ADP + phosphate + H(+). Functionally, acts as an ATP-dependent RNA helicase, able to unwind both RNA-RNA and RNA-DNA duplexes. Possesses 5' single-stranded RNA overhang nuclease activity. Possesses ATPase activity on various RNA, but not DNA polynucleotides. May play a role in RNA clearance at DNA double-strand breaks (DSBs), thereby facilitating the template-guided repair of transcriptionally active regions of the genome. Together with RELA, acts as a coactivator to enhance NF-kappa-B-mediated transcriptional activation. Acts as a positive transcriptional regulator of cyclin CCND2 expression. Binds to the cyclin CCND2 promoter region. Associates with chromatin at the NF-kappa-B promoter region via association with RELA. Binds to poly(A) RNA. May be involved in 3'-end cleavage and polyadenylation of pre-mRNAs. Component of the tRNA-splicing ligase complex required to facilitate the enzymatic turnover of catalytic subunit RTCB: together with archease (ZBTB8OS), acts by facilitating the guanylylation of RTCB, a key intermediate step in tRNA ligation. Component of a multi-helicase-TICAM1 complex that acts as a cytoplasmic sensor of viral double-stranded RNA (dsRNA) and plays a role in the activation of a cascade of antiviral responses including the induction of pro-inflammatory cytokines via the adapter molecule TICAM1. Specifically binds (via helicase ATP-binding domain) on both short and long poly(I:C) dsRNA. This chain is ATP-dependent RNA helicase DDX1 (DDX1), found in Bos taurus (Bovine).